The primary structure comprises 874 residues: Alanine--tRNA ligase (874 aa).

Zn(2+) is bound by residues histidine 562, histidine 566, cysteine 665, and histidine 669.

The protein belongs to the class-II aminoacyl-tRNA synthetase family. Requires Zn(2+) as cofactor.

The protein resides in the cytoplasm. The enzyme catalyses tRNA(Ala) + L-alanine + ATP = L-alanyl-tRNA(Ala) + AMP + diphosphate. Catalyzes the attachment of alanine to tRNA(Ala) in a two-step reaction: alanine is first activated by ATP to form Ala-AMP and then transferred to the acceptor end of tRNA(Ala). Also edits incorrectly charged Ser-tRNA(Ala) and Gly-tRNA(Ala) via its editing domain. The chain is Alanine--tRNA ligase from Pseudomonas putida (strain ATCC 47054 / DSM 6125 / CFBP 8728 / NCIMB 11950 / KT2440).